The following is a 103-amino-acid chain: Pyrimidine/purine nucleoside phosphorylase (103 aa).

It belongs to the nucleoside phosphorylase PpnP family.

It carries out the reaction a purine D-ribonucleoside + phosphate = a purine nucleobase + alpha-D-ribose 1-phosphate. The enzyme catalyses adenosine + phosphate = alpha-D-ribose 1-phosphate + adenine. The catalysed reaction is cytidine + phosphate = cytosine + alpha-D-ribose 1-phosphate. It catalyses the reaction guanosine + phosphate = alpha-D-ribose 1-phosphate + guanine. It carries out the reaction inosine + phosphate = alpha-D-ribose 1-phosphate + hypoxanthine. The enzyme catalyses thymidine + phosphate = 2-deoxy-alpha-D-ribose 1-phosphate + thymine. The catalysed reaction is uridine + phosphate = alpha-D-ribose 1-phosphate + uracil. It catalyses the reaction xanthosine + phosphate = alpha-D-ribose 1-phosphate + xanthine. In terms of biological role, catalyzes the phosphorolysis of diverse nucleosides, yielding D-ribose 1-phosphate and the respective free bases. Can use uridine, adenosine, guanosine, cytidine, thymidine, inosine and xanthosine as substrates. Also catalyzes the reverse reactions. The chain is Pyrimidine/purine nucleoside phosphorylase from Cupriavidus metallidurans (strain ATCC 43123 / DSM 2839 / NBRC 102507 / CH34) (Ralstonia metallidurans).